A 130-amino-acid polypeptide reads, in one-letter code: Small ribosomal subunit protein uS9 (130 aa).

Belongs to the universal ribosomal protein uS9 family.

This Edwardsiella ictaluri (strain 93-146) protein is Small ribosomal subunit protein uS9.